The primary structure comprises 411 residues: Probable indole-3-pyruvate monooxygenase YUCCA4 (411 aa).

Residue Gly21 to Gly26 participates in FAD binding. NADP(+) is bound at residue Gly183 to Gly188.

Belongs to the FMO family. Requires FAD as cofactor. In terms of tissue distribution, expressed in leaves, stems, flowers, buds and siliques. Detected in the apical gynoecium and in the developing ovules.

The protein localises to the cytoplasm. It localises to the endoplasmic reticulum membrane. The catalysed reaction is indole-3-pyruvate + NADPH + O2 + H(+) = (indol-3-yl)acetate + CO2 + NADP(+) + H2O. It functions in the pathway plant hormone metabolism; auxin biosynthesis. Its function is as follows. Involved in auxin biosynthesis. Both isoforms are catalitically active. Involved during embryogenesis and seedling development. Required for the formation of floral organs and vascular tissues. Belongs to the set of redundant YUCCA genes probably responsible for auxin biosynthesis in shoots. The chain is Probable indole-3-pyruvate monooxygenase YUCCA4 (YUC4) from Arabidopsis thaliana (Mouse-ear cress).